Consider the following 415-residue polypeptide: Esterase FrsA (415 aa).

The interval 1–23 is disordered; the sequence is MANRNLSESLFKPRQKHQETSTL.

It belongs to the FrsA family.

It catalyses the reaction a carboxylic ester + H2O = an alcohol + a carboxylate + H(+). Its function is as follows. Catalyzes the hydrolysis of esters. This chain is Esterase FrsA, found in Photorhabdus laumondii subsp. laumondii (strain DSM 15139 / CIP 105565 / TT01) (Photorhabdus luminescens subsp. laumondii).